Reading from the N-terminus, the 217-residue chain is Cytidylate kinase (217 aa).

9–17 serves as a coordination point for ATP; it reads GPAGSGKTT.

It belongs to the cytidylate kinase family. Type 1 subfamily.

It is found in the cytoplasm. It catalyses the reaction CMP + ATP = CDP + ADP. The enzyme catalyses dCMP + ATP = dCDP + ADP. In Thermosipho melanesiensis (strain DSM 12029 / CIP 104789 / BI429), this protein is Cytidylate kinase.